The chain runs to 439 residues: GTPase Obg (439 aa).

In terms of domain architecture, Obg spans 5–164 (TDFFDQATIV…LTLELELKML (160 aa)). Residues 165–335 (ADVGLVGFPN…LLRRVADLLR (171 aa)) form the OBG-type G domain. Residues 171 to 178 (GFPNAGKS), 196 to 200 (FTTLT), 217 to 220 (DIPG), 287 to 290 (NKAD), and 316 to 318 (SAA) contribute to the GTP site. Mg(2+) contacts are provided by Ser178 and Thr198. An OCT domain is found at 356–433 (LPEVDENAFT…IGRAELVWDD (78 aa)).

This sequence belongs to the TRAFAC class OBG-HflX-like GTPase superfamily. OBG GTPase family. Monomer. It depends on Mg(2+) as a cofactor.

Its subcellular location is the cytoplasm. In terms of biological role, an essential GTPase which binds GTP, GDP and possibly (p)ppGpp with moderate affinity, with high nucleotide exchange rates and a fairly low GTP hydrolysis rate. Plays a role in control of the cell cycle, stress response, ribosome biogenesis and in those bacteria that undergo differentiation, in morphogenesis control. This chain is GTPase Obg, found in Chloroflexus aurantiacus (strain ATCC 29364 / DSM 637 / Y-400-fl).